A 311-amino-acid chain; its full sequence is Coproporphyrin III ferrochelatase 1 (311 aa).

Residues Tyr12, Arg29, 45-46 (RY), Ser53, and Tyr124 contribute to the Fe-coproporphyrin III site. Fe(2+)-binding residues include His182 and Glu263.

This sequence belongs to the ferrochelatase family.

The protein localises to the cytoplasm. The enzyme catalyses Fe-coproporphyrin III + 2 H(+) = coproporphyrin III + Fe(2+). Its pathway is porphyrin-containing compound metabolism; protoheme biosynthesis. Involved in coproporphyrin-dependent heme b biosynthesis. Catalyzes the insertion of ferrous iron into coproporphyrin III to form Fe-coproporphyrin III. The polypeptide is Coproporphyrin III ferrochelatase 1 (Bacillus cereus (strain ATCC 10987 / NRS 248)).